The following is a 269-amino-acid chain: Thymidylate synthase (269 aa).

Position 26 (Arg26) interacts with dUMP. A (6R)-5,10-methylene-5,6,7,8-tetrahydrofolate-binding site is contributed by His56. 131-132 (RR) serves as a coordination point for dUMP. The active-site Nucleophile is the Cys151. DUMP contacts are provided by residues 171-174 (RSAD), Asn182, and 212-214 (HIY). Asp174 provides a ligand contact to (6R)-5,10-methylene-5,6,7,8-tetrahydrofolate. Ala268 provides a ligand contact to (6R)-5,10-methylene-5,6,7,8-tetrahydrofolate.

Belongs to the thymidylate synthase family. Bacterial-type ThyA subfamily. In terms of assembly, homodimer.

It localises to the cytoplasm. It catalyses the reaction dUMP + (6R)-5,10-methylene-5,6,7,8-tetrahydrofolate = 7,8-dihydrofolate + dTMP. The protein operates within pyrimidine metabolism; dTTP biosynthesis. Its function is as follows. Catalyzes the reductive methylation of 2'-deoxyuridine-5'-monophosphate (dUMP) to 2'-deoxythymidine-5'-monophosphate (dTMP) while utilizing 5,10-methylenetetrahydrofolate (mTHF) as the methyl donor and reductant in the reaction, yielding dihydrofolate (DHF) as a by-product. This enzymatic reaction provides an intracellular de novo source of dTMP, an essential precursor for DNA biosynthesis. The polypeptide is Thymidylate synthase (Leifsonia xyli subsp. xyli (strain CTCB07)).